The following is a 260-amino-acid chain: PYMRYIEAKLHEVLPSRFYIHSGKGLEELNEWVIKGKFEGICTESDYEAFDASQDQYIVAFELALMEYLGLPRDLIEDYAFIKCHLGSKLGNFAIMRFSGEASTFLFNTMANMLFTFLRYNIKDSEHICFAGDDMCASERLCIKKEHEGFLNKLKLKAKVFFVDKPTFCGWHLCPDGIYKKPQLVLERMCIAKEKNNLANCLDNYAIEVSYAYKLGERAVNRMDEEELEAAYNCVRIIIKNKKLLKSDILGFYSNIEKQI.

The 108-residue stretch at G40–H147 folds into the RdRp catalytic domain.

This sequence belongs to the potexviruses/carlaviruses RNA replication protein family.

The catalysed reaction is RNA(n) + a ribonucleoside 5'-triphosphate = RNA(n+1) + diphosphate. The enzyme catalyses ATP + H2O = ADP + phosphate + H(+). Its function is as follows. RNA replication. The central part of this protein possibly functions as an ATP-binding helicase. This Chrysanthemum morifolium (Florist's daisy) protein is RNA replication protein.